A 288-amino-acid polypeptide reads, in one-letter code: Oxaloacetate decarboxylase (288 aa).

Ser-47 provides a ligand contact to substrate. Asp-85 is a Mg(2+) binding site. Residues Arg-156 and His-232 each contribute to the substrate site.

The protein belongs to the isocitrate lyase/PEP mutase superfamily. Oxaloacetate decarboxylase family. Homotetramer; dimer of dimers. Mg(2+) serves as cofactor.

It carries out the reaction oxaloacetate + H(+) = pyruvate + CO2. Catalyzes the decarboxylation of oxaloacetate into pyruvate. Seems to play a role in maintaining cellular concentrations of bicarbonate and pyruvate. This Bradyrhizobium sp. (strain BTAi1 / ATCC BAA-1182) protein is Oxaloacetate decarboxylase.